The chain runs to 326 residues: tRNA-dihydrouridine(20/20a) synthase (326 aa).

FMN-binding positions include 11–13 and Gln63; that span reads PML. The Proton donor role is filled by Cys93. FMN contacts are provided by residues Lys132, His165, 205–207, and 227–228; these read NGG and GR.

This sequence belongs to the Dus family. DusA subfamily. FMN serves as cofactor.

It catalyses the reaction 5,6-dihydrouridine(20) in tRNA + NADP(+) = uridine(20) in tRNA + NADPH + H(+). The catalysed reaction is 5,6-dihydrouridine(20) in tRNA + NAD(+) = uridine(20) in tRNA + NADH + H(+). It carries out the reaction 5,6-dihydrouridine(20a) in tRNA + NADP(+) = uridine(20a) in tRNA + NADPH + H(+). The enzyme catalyses 5,6-dihydrouridine(20a) in tRNA + NAD(+) = uridine(20a) in tRNA + NADH + H(+). Its function is as follows. Catalyzes the synthesis of 5,6-dihydrouridine (D), a modified base found in the D-loop of most tRNAs, via the reduction of the C5-C6 double bond in target uridines. Specifically modifies U20 and U20a in tRNAs. This Vibrio parahaemolyticus serotype O3:K6 (strain RIMD 2210633) protein is tRNA-dihydrouridine(20/20a) synthase.